We begin with the raw amino-acid sequence, 670 residues long: Leucine-rich repeat-containing protein 45 (670 aa).

LRR repeat units follow at residues 58–80, 87–107, 115–136, 145–166, 173–194, and 201–212; these read TLCT…LLLR, VLRF…EALG, SIQS…FATF, ALQR…ELAL, TLQQ…ALMN, and TLWRLDLAGNNI. A coiled-coil region spans residues 252 to 645; it reads REEKSKQFLD…IARIRDEEAQ (394 aa). Serine 661 bears the Phosphoserine; by NEK2 mark.

As to quaternary structure, homomer. Interacts with CROCC/rootletin and CEP250. Interacts with CEP44. Interacts with CCDC102B (via N-terminus). Phosphorylated by NEK2 during misosis, phosphorylation reduces centrosomal localization which subsequently leads to centrosome separation.

It localises to the cytoplasm. Its subcellular location is the cytoskeleton. The protein localises to the microtubule organizing center. The protein resides in the centrosome. In terms of biological role, component of the proteinaceous fiber-like linker between two centrioles, required for centrosome cohesion. The polypeptide is Leucine-rich repeat-containing protein 45 (LRRC45) (Homo sapiens (Human)).